Consider the following 343-residue polypeptide: Aspartate carbamoyltransferase catalytic subunit (343 aa).

Residues Arg-91 and Thr-92 each coordinate carbamoyl phosphate. Residue Lys-119 participates in L-aspartate binding. Carbamoyl phosphate is bound by residues Arg-141, His-171, and Gln-174. L-aspartate-binding residues include Arg-204 and Arg-259. The carbamoyl phosphate site is built by Gly-300 and Pro-301.

It belongs to the aspartate/ornithine carbamoyltransferase superfamily. ATCase family. As to quaternary structure, heterododecamer (2C3:3R2) of six catalytic PyrB chains organized as two trimers (C3), and six regulatory PyrI chains organized as three dimers (R2).

The catalysed reaction is carbamoyl phosphate + L-aspartate = N-carbamoyl-L-aspartate + phosphate + H(+). Its pathway is pyrimidine metabolism; UMP biosynthesis via de novo pathway; (S)-dihydroorotate from bicarbonate: step 2/3. Catalyzes the condensation of carbamoyl phosphate and aspartate to form carbamoyl aspartate and inorganic phosphate, the committed step in the de novo pyrimidine nucleotide biosynthesis pathway. The sequence is that of Aspartate carbamoyltransferase catalytic subunit from Burkholderia thailandensis (strain ATCC 700388 / DSM 13276 / CCUG 48851 / CIP 106301 / E264).